We begin with the raw amino-acid sequence, 115 residues long: Large ribosomal subunit protein P2z (115 aa).

A disordered region spans residues 62 to 115 (LASVPSGGGGGVAVASATSGGGGGGGAPAAESKKEEKKEEKEESDDDMGFSLFE). Basic and acidic residues predominate over residues 92 to 102 (ESKKEEKKEEK). Residue S105 is modified to Phosphoserine.

This sequence belongs to the eukaryotic ribosomal protein P1/P2 family. P1 and P2 exist as dimers at the large ribosomal subunit. Phosphorylated.

Plays an important role in the elongation step of protein synthesis. In Arabidopsis thaliana (Mouse-ear cress), this protein is Large ribosomal subunit protein P2z (RPP2A).